The primary structure comprises 92 residues: Defensin (92 aa).

Positions 1 to 20 (MKFFVLVAIAFALLACVAQA) are cleaved as a signal peptide. Positions 21 to 52 (QPVSDVDPIPEDHVLVHEDAHQEVLQHSRQKR) are excised as a propeptide. Intrachain disulfides connect Cys55–Cys82, Cys68–Cys88, and Cys72–Cys90.

Belongs to the invertebrate defensin family. Type 1 subfamily. As to expression, hemolymph (at protein level).

The protein localises to the secreted. Its function is as follows. Responsible for the anti Gram-positive activity of immune hemolymph. Expressed in the absence of immune challenge during metamorphosis. The chain is Defensin (Def) from Drosophila melanogaster (Fruit fly).